The primary structure comprises 106 residues: UPF0060 membrane protein CHU_3331 (106 aa).

4 consecutive transmembrane segments (helical) span residues 5-25 (FYFILAAFCEISGCYLFWLHF), 31-51 (ALLLLPAAACLLVFAYLLTKI), 59-79 (AYAVYGGIYIVCSLAWMYGIE), and 85-105 (IWDYIGVGICLIGASVILFAP).

Belongs to the UPF0060 family.

The protein localises to the cell inner membrane. This chain is UPF0060 membrane protein CHU_3331, found in Cytophaga hutchinsonii (strain ATCC 33406 / DSM 1761 / CIP 103989 / NBRC 15051 / NCIMB 9469 / D465).